Here is a 148-residue protein sequence, read N- to C-terminus: Probable glucosamine 6-phosphate N-acetyltransferase (148 aa).

The N-acetyltransferase domain occupies 3-148 (ISINELNFDD…KQMALYLNGK (146 aa)). Substrate-binding positions include threonine 25, 72–75 (KFIH), and 84–86 (EDV). Residues 86 to 88 (VVV) and 94 to 99 (LHGIGK) contribute to the acetyl-CoA site. Residues 115-116 (YK) and aspartate 120 each bind substrate. Acetyl-CoA is bound at residue 129–131 (YCK). Glutamate 138 contributes to the substrate binding site.

This sequence belongs to the acetyltransferase family. GNA1 subfamily.

The catalysed reaction is D-glucosamine 6-phosphate + acetyl-CoA = N-acetyl-D-glucosamine 6-phosphate + CoA + H(+). It participates in nucleotide-sugar biosynthesis; UDP-N-acetyl-alpha-D-glucosamine biosynthesis; N-acetyl-alpha-D-glucosamine 1-phosphate from alpha-D-glucosamine 6-phosphate (route I): step 1/2. The protein is Probable glucosamine 6-phosphate N-acetyltransferase of Acanthamoeba polyphaga (Amoeba).